A 446-amino-acid polypeptide reads, in one-letter code: ATP-dependent protease ATPase subunit HslU (446 aa).

ATP contacts are provided by residues Val-18, 60-65 (GVGKTE), Asp-259, Glu-324, and Arg-396.

The protein belongs to the ClpX chaperone family. HslU subfamily. A double ring-shaped homohexamer of HslV is capped on each side by a ring-shaped HslU homohexamer. The assembly of the HslU/HslV complex is dependent on binding of ATP.

It is found in the cytoplasm. Its function is as follows. ATPase subunit of a proteasome-like degradation complex; this subunit has chaperone activity. The binding of ATP and its subsequent hydrolysis by HslU are essential for unfolding of protein substrates subsequently hydrolyzed by HslV. HslU recognizes the N-terminal part of its protein substrates and unfolds these before they are guided to HslV for hydrolysis. This chain is ATP-dependent protease ATPase subunit HslU, found in Acidovorax ebreus (strain TPSY) (Diaphorobacter sp. (strain TPSY)).